Reading from the N-terminus, the 719-residue chain is Ferric reductase transmembrane component 4 (719 aa).

The first 18 residues, 1–18 (MLLVHIISFLLFFQLSAA), serve as a signal peptide directing secretion. The Extracellular portion of the chain corresponds to 19-156 (KAPPSKTSLI…YGYYYNHDIP (138 aa)). 6 N-linked (GlcNAc...) asparagine glycosylation sites follow: asparagine 51, asparagine 80, asparagine 101, asparagine 113, asparagine 127, and asparagine 135. A helical transmembrane segment spans residues 157–177 (YYFGGIICAYFVGVMLLAGLI). At 178–228 (RFLNYTPIKKIMFQQKLVNYVRGYTTLPTLYEKHAEPFSYLKVITGYLPTR) the chain is on the cytoplasmic side. Residues 229-249 (FETLVILGYLILHTIFMAYKY) traverse the membrane as a helical segment. The Extracellular portion of the chain corresponds to 250–267 (QYDPYHIIFAAHRAEVAH). The helical transmembrane segment at 268-288 (FVAYRSGILSFAHLPLIVLFA) threads the bilayer. The Ferric oxidoreductase domain maps to 273–407 (SGILSFAHLP…SGIEWIYAAI (135 aa)). Topologically, residues 289–304 (GRNNFLQLISGLKHTS) are cytoplasmic. The helical transmembrane segment at 305-325 (FIVFHKWLGRMMFLDAIIHAA) threads the bilayer. Heme-binding residues include histidine 309 and histidine 323. The Extracellular segment spans residues 326-346 (GFTNYYLYYKKWNTVRLRVYW). The chain crosses the membrane as a helical span at residues 347–367 (KFGIATTCLAGMLIFFSIAAF). Residues 368–373 (RRHYYE) lie on the Cytoplasmic side of the membrane. Residues 374-394 (TFMALHIVFAALFLYTCWEHV) form a helical membrane-spanning segment. Positions 379 and 393 each coordinate heme. A topological domain (extracellular) is located at residue threonine 395. A helical transmembrane segment spans residues 396 to 416 (NFSGIEWIYAAIAIWGVDRIV). One can recognise an FAD-binding FR-type domain in the interval 408–527 (AIWGVDRIVR…EGPYGSKSTA (120 aa)). Residues 417–719 (RITRIALLGF…IEYLEEYQAW (303 aa)) are Cytoplasmic-facing. Residue 472–478 (HPFTVMD) coordinates FAD. 519–522 (GPYG) contributes to the NADP(+) binding site. Composition is skewed to polar residues over residues 606–618 (EKISSNEVKNGET) and 625–643 (SSLSNSEKAPSESENTELP). Residues 606 to 643 (EKISSNEVKNGETTAEKAPSSLSNSEKAPSESENTELP) form a disordered region. 685–686 (CG) contacts NADP(+).

This sequence belongs to the ferric reductase (FRE) family. It depends on FAD as a cofactor.

It is found in the cell membrane. The enzyme catalyses 2 a Fe(II)-siderophore + NADP(+) + H(+) = 2 a Fe(III)-siderophore + NADPH. Functionally, siderophore-iron reductase responsible for reducing extracellular iron prior to import. Catalyzes the reductive uptake of Fe(3+) bound to dihydroxamate rhodotorulic acid. Fe(3+) is reduced to Fe(2+), which then dissociates from the siderophore and can be imported by the high-affinity Fe(2+) transport complex in the plasma membrane. This Saccharomyces cerevisiae (strain ATCC 204508 / S288c) (Baker's yeast) protein is Ferric reductase transmembrane component 4 (FRE4).